The primary structure comprises 160 residues: Small ribosomal subunit protein bS6 (160 aa).

2 stretches are compositionally biased toward basic and acidic residues: residues 94–119 and 125–152; these read EEHEEGPSAMMRKADRDRERDDRGGR and RGDREGRGDREGGGFRGDRGPRRPREDA. The disordered stretch occupies residues 94–160; that stretch reads EEHEEGPSAM…DADTAAASEE (67 aa).

It belongs to the bacterial ribosomal protein bS6 family.

Functionally, binds together with bS18 to 16S ribosomal RNA. The polypeptide is Small ribosomal subunit protein bS6 (Rhodopseudomonas palustris (strain BisB5)).